Here is a 314-residue protein sequence, read N- to C-terminus: Mitochondrial 2-oxoglutarate/malate carrier protein (314 aa).

Alanine 2 is modified (N-acetylalanine). The residue at position 6 (serine 6) is a Phosphoserine. 3 Solcar repeats span residues valine 23–arginine 108, proline 117–phenylalanine 208, and aspartate 217–alanine 306. The chain crosses the membrane as a helical span at residues lysine 24–leucine 42. Lysine 57 carries the N6-succinyllysine modification. Position 73 is an N6-acetyllysine (lysine 73). The chain crosses the membrane as a helical span at residues glycine 83–isoleucine 101. At tyrosine 102 the chain carries Phosphotyrosine. The next 3 helical transmembrane spans lie at phenylalanine 119–alanine 140, glycine 183–tyrosine 202, and histidine 222–valine 240. At lysine 256 the chain carries N6-acetyllysine. A helical transmembrane segment spans residues glycine 281–leucine 300.

The protein belongs to the mitochondrial carrier (TC 2.A.29) family. As to quaternary structure, interacts with SMIM26. In terms of tissue distribution, most highly expressed in the heart.

The protein localises to the mitochondrion inner membrane. It catalyses the reaction (S)-malate(in) + 2-oxoglutarate(out) = (S)-malate(out) + 2-oxoglutarate(in). The enzyme catalyses malonate(in) + 2-oxoglutarate(out) = malonate(out) + 2-oxoglutarate(in). It carries out the reaction succinate(in) + 2-oxoglutarate(out) = succinate(out) + 2-oxoglutarate(in). The catalysed reaction is maleate(in) + 2-oxoglutarate(out) = maleate(out) + 2-oxoglutarate(in). It catalyses the reaction oxaloacetate(in) + 2-oxoglutarate(out) = oxaloacetate(out) + 2-oxoglutarate(in). Its function is as follows. Catalyzes the transport of 2-oxoglutarate (alpha-oxoglutarate) across the inner mitochondrial membrane in an electroneutral exchange for malate. Can also exchange 2-oxoglutarate for other dicarboxylic acids such as malonate, succinate, maleate and oxaloacetate, although with lower affinity. Contributes to several metabolic processes, including the malate-aspartate shuttle, the oxoglutarate/isocitrate shuttle, in gluconeogenesis from lactate, and in nitrogen metabolism. Maintains mitochondrial fusion and fission events, and the organization and morphology of cristae. Involved in the regulation of apoptosis. Helps protect from cytotoxic-induced apoptosis by modulating glutathione levels in mitochondria. This is Mitochondrial 2-oxoglutarate/malate carrier protein (SLC25A11) from Homo sapiens (Human).